The sequence spans 590 residues: L-fucose isomerase (590 aa).

Active-site proton acceptor residues include E337 and D361. E337, D361, and H528 together coordinate Mn(2+).

The protein belongs to the L-fucose isomerase family. It depends on Mn(2+) as a cofactor.

The protein resides in the cytoplasm. It catalyses the reaction L-fucose = L-fuculose. It participates in carbohydrate degradation; L-fucose degradation; L-lactaldehyde and glycerone phosphate from L-fucose: step 1/3. In terms of biological role, converts the aldose L-fucose into the corresponding ketose L-fuculose. This chain is L-fucose isomerase, found in Bacteroides fragilis (strain ATCC 25285 / DSM 2151 / CCUG 4856 / JCM 11019 / LMG 10263 / NCTC 9343 / Onslow / VPI 2553 / EN-2).